We begin with the raw amino-acid sequence, 532 residues long: Eukaryotic translation initiation factor 3 subunit D (532 aa).

A disordered region spans residues Ala-108–Trp-161. The span at Ala-117–Arg-131 shows a compositional bias: gly residues. Low complexity predominate over residues Gly-132–Arg-141. The tract at residues Pro-296 to Pro-310 is RNA gate.

The protein belongs to the eIF-3 subunit D family. In terms of assembly, component of the eukaryotic translation initiation factor 3 (eIF-3) complex.

The protein resides in the cytoplasm. In terms of biological role, mRNA cap-binding component of the eukaryotic translation initiation factor 3 (eIF-3) complex, which is involved in protein synthesis of a specialized repertoire of mRNAs and, together with other initiation factors, stimulates binding of mRNA and methionyl-tRNAi to the 40S ribosome. The eIF-3 complex specifically targets and initiates translation of a subset of mRNAs involved in cell proliferation. In the eIF-3 complex, eif3d specifically recognizes and binds the 7-methylguanosine cap of a subset of mRNAs. In Yarrowia lipolytica (strain CLIB 122 / E 150) (Yeast), this protein is Eukaryotic translation initiation factor 3 subunit D.